Consider the following 258-residue polypeptide: Cruciform cutting endonuclease 1, mitochondrial (258 aa).

One can recognise an SAP domain in the interval 1–35 (MATVKLSFLQHICKLTGLSRSGRKDELLRRIVDSP). Residues Asp46 and Asp230 each coordinate Mg(2+).

In terms of assembly, homodimer.

The protein localises to the mitochondrion. It catalyses the reaction Endonucleolytic cleavage at a junction such as a reciprocal single-stranded crossover between two homologous DNA duplexes (Holliday junction).. Functionally, capable of resolving Holliday junctions. Specific for 4-way junctions. Seems to be important for the maintenance of mitochondrial DNA. Cleaves fixed junctions at the point of strand exchange. Cleaves after 5'-CT-3' and 5'-TT-3' sequences. The chain is Cruciform cutting endonuclease 1, mitochondrial (cce1) from Schizosaccharomyces pombe (strain 972 / ATCC 24843) (Fission yeast).